Consider the following 274-residue polypeptide: 2,3,4,5-tetrahydropyridine-2,6-dicarboxylate N-succinyltransferase (274 aa).

Substrate-binding residues include Arg-106 and Asp-143.

It belongs to the transferase hexapeptide repeat family. Homotrimer.

It localises to the cytoplasm. The enzyme catalyses (S)-2,3,4,5-tetrahydrodipicolinate + succinyl-CoA + H2O = (S)-2-succinylamino-6-oxoheptanedioate + CoA. Its pathway is amino-acid biosynthesis; L-lysine biosynthesis via DAP pathway; LL-2,6-diaminopimelate from (S)-tetrahydrodipicolinate (succinylase route): step 1/3. The polypeptide is 2,3,4,5-tetrahydropyridine-2,6-dicarboxylate N-succinyltransferase (Cupriavidus metallidurans (strain ATCC 43123 / DSM 2839 / NBRC 102507 / CH34) (Ralstonia metallidurans)).